Consider the following 325-residue polypeptide: NADH-quinone oxidoreductase subunit H (325 aa).

9 helical membrane-spanning segments follow: residues 11 to 31, 50 to 69, 81 to 101, 114 to 134, 154 to 174, 186 to 206, 237 to 257, 265 to 285, and 304 to 324; these read ILLSILKAVVILLVVVTCGAF, NRVGWGGSLQLVADMIKMFF, VIFTLAPMIAFTSLLLAFAIV, IGILFFLMMAGLAVYAVLFAG, LSYEVFLGLSLMGVVAQAGSF, IWNVIPQFFGFVTFAIAGVAV, FFVGEYIGIVTISALMVTLFF, LPPFIWFALKTAFFMMMFILI, and VCLPLTLINLLVTAAVILWQA.

Belongs to the complex I subunit 1 family. In terms of assembly, NDH-1 is composed of 13 different subunits. Subunits NuoA, H, J, K, L, M, N constitute the membrane sector of the complex.

Its subcellular location is the cell inner membrane. The enzyme catalyses a quinone + NADH + 5 H(+)(in) = a quinol + NAD(+) + 4 H(+)(out). NDH-1 shuttles electrons from NADH, via FMN and iron-sulfur (Fe-S) centers, to quinones in the respiratory chain. The immediate electron acceptor for the enzyme in this species is believed to be ubiquinone. Couples the redox reaction to proton translocation (for every two electrons transferred, four hydrogen ions are translocated across the cytoplasmic membrane), and thus conserves the redox energy in a proton gradient. This subunit may bind ubiquinone. The sequence is that of NADH-quinone oxidoreductase subunit H from Citrobacter koseri (strain ATCC BAA-895 / CDC 4225-83 / SGSC4696).